The sequence spans 380 residues: Queuine tRNA-ribosyltransferase (380 aa).

D96 functions as the Proton acceptor in the catalytic mechanism. Residues 96-100 (DSGGF), D150, Q193, and G220 contribute to the substrate site. Residues 251-257 (GVGAPDS) form an RNA binding region. The active-site Nucleophile is the D270. Positions 275–279 (TRIAR) are RNA binding; important for wobble base 34 recognition. Positions 308, 310, 313, and 339 each coordinate Zn(2+).

Belongs to the queuine tRNA-ribosyltransferase family. Homodimer. Within each dimer, one monomer is responsible for RNA recognition and catalysis, while the other monomer binds to the replacement base PreQ1. The cofactor is Zn(2+).

The catalysed reaction is 7-aminomethyl-7-carbaguanine + guanosine(34) in tRNA = 7-aminomethyl-7-carbaguanosine(34) in tRNA + guanine. Its pathway is tRNA modification; tRNA-queuosine biosynthesis. Functionally, catalyzes the base-exchange of a guanine (G) residue with the queuine precursor 7-aminomethyl-7-deazaguanine (PreQ1) at position 34 (anticodon wobble position) in tRNAs with GU(N) anticodons (tRNA-Asp, -Asn, -His and -Tyr). Catalysis occurs through a double-displacement mechanism. The nucleophile active site attacks the C1' of nucleotide 34 to detach the guanine base from the RNA, forming a covalent enzyme-RNA intermediate. The proton acceptor active site deprotonates the incoming PreQ1, allowing a nucleophilic attack on the C1' of the ribose to form the product. After dissociation, two additional enzymatic reactions on the tRNA convert PreQ1 to queuine (Q), resulting in the hypermodified nucleoside queuosine (7-(((4,5-cis-dihydroxy-2-cyclopenten-1-yl)amino)methyl)-7-deazaguanosine). The chain is Queuine tRNA-ribosyltransferase from Streptococcus gordonii (strain Challis / ATCC 35105 / BCRC 15272 / CH1 / DL1 / V288).